The chain runs to 369 residues: Terpene cyclase DEP1 (369 aa).

Transmembrane regions (helical) follow at residues 9–29 (FFYL…FNGM), 82–102 (LLFF…LIES), 118–138 (AMVL…LYLV), 157–177 (ALLV…VPAW), 190–210 (IALF…LASI), 234–254 (LVLA…GALI), 298–318 (LFSQ…SHLL), and 342–362 (LVYL…SFAL).

The protein belongs to the membrane-bound ascI terpene cyclase family.

The protein localises to the membrane. The protein operates within polyketide biosynthesis. Part of the gene cluster that mediates the biosynthesis of depudecin, a highly oxidized eleven-carbon linear polyketide that acts as a histone deacetylase (HDAC) inhibitor and makes a small contribution to pathogenesis. The reducing polyketide synthase DEP5 is the central enzyme in depudecin biosynthesis by yielding the backbone polyketide chain. The monooxygenases DEP2 and DEP4, as well as the uncharacterized protein DEP1, then act as tailoring enzymes to modify the intermediate polyketide chain into depudecin. The protein is Terpene cyclase DEP1 of Alternaria brassicicola (Dark leaf spot agent).